Reading from the N-terminus, the 469-residue chain is Secreted triacylglycerol lipase LIP3 (469 aa).

The first 21 residues, methionine 1–alanine 21, serve as a signal peptide directing secretion. Cysteine 121 and cysteine 292 are joined by a disulfide. The active-site Nucleophile is the serine 205. A glycan (N-linked (GlcNAc...) asparagine) is linked at asparagine 238. Active-site residues include aspartate 352 and histidine 386.

Belongs to the AB hydrolase superfamily. Lipase family. Class Lip subfamily.

The protein resides in the secreted. It catalyses the reaction a triacylglycerol + H2O = a diacylglycerol + a fatty acid + H(+). The catalysed reaction is a monoacylglycerol + H2O = glycerol + a fatty acid + H(+). The enzyme catalyses a diacylglycerol + H2O = a monoacylglycerol + a fatty acid + H(+). Its function is as follows. Secreted lipase that hydrolyzes acylglycerol lipids such as triacylglycerols and consequently releases free fatty acid. Generates free oleic acid from the substrates mono- and diolein and hydrolyzes triolein in significant amounts. Due to an absence of fatty acid synthase genes in Malassezia species, secretory lipases are essential for the yeast to generate free fatty acids from degradation of sebum and assimilate them as lipid sources for growth. Plays an essential role at the pathogen-host interface during disease progression. Performs also the reverse reaction to build diacyl- and triacyl- glycerols from monoacylglycerols. This is Secreted triacylglycerol lipase LIP3 from Malassezia restricta (strain ATCC 96810 / NBRC 103918 / CBS 7877) (Seborrheic dermatitis infection agent).